Here is a 944-residue protein sequence, read N- to C-terminus: Serine/threonine-protein kinase Nek9 (944 aa).

Residues 34–290 (YIPIRVLGHG…ADEILERPIL (257 aa)) form the Protein kinase domain. ATP-binding positions include 40–48 (LGHGAYGEA) and K63. D158 functions as the Proton acceptor in the catalytic mechanism. T192 carries the phosphothreonine; by autocatalysis modification. RCC1 repeat units follow at residues 370-426 (KELY…ITDE), 427-480 (GQLY…LTRS), 481-532 (KSVY…LTLT), 533-597 (GKVL…IDER), 598-650 (GRLL…ATAD), and 651-708 (NHIF…IVEK). Disordered regions lie at residues 726–782 (TLAQ…SCPS) and 794–825 (IPMP…PPDA). Basic and acidic residues predominate over residues 738–748 (SREEDSDRESL). 2 stretches are compositionally biased toward polar residues: residues 768-781 (PFNT…SSCP) and 801-816 (NFVS…TSMQ). A coiled-coil region spans residues 835–890 (TCSTLQEEVRKLQDLVSTYRHEQELLCRENSRLALEVQELNGKLQSAMQMNQVVNK). Residues 906–925 (WKSSPPSSGNPEMSREDSDA) form a disordered region.

This sequence belongs to the protein kinase superfamily. NEK Ser/Thr protein kinase family. NIMA subfamily. Homodimer. Requires Mg(2+) as cofactor. Post-translationally, autophosphorylated on serine and threonine residues.

The protein resides in the cytoplasm. It carries out the reaction L-seryl-[protein] + ATP = O-phospho-L-seryl-[protein] + ADP + H(+). The catalysed reaction is L-threonyl-[protein] + ATP = O-phospho-L-threonyl-[protein] + ADP + H(+). Functionally, pleiotropic regulator of mitotic progression, participating in the control of spindle dynamics and chromosome separation. Important for G1/S transition and S phase progression. Phosphorylates nek6 and nek7 and stimulates their activity. This chain is Serine/threonine-protein kinase Nek9 (nek9), found in Xenopus laevis (African clawed frog).